Consider the following 136-residue polypeptide: Protein NrdI (136 aa).

The protein belongs to the NrdI family.

Its function is as follows. Probably involved in ribonucleotide reductase function. This is Protein NrdI from Shigella dysenteriae serotype 1 (strain Sd197).